The chain runs to 394 residues: Elongation factor Tu (394 aa).

Residues 10–204 form the tr-type G domain; that stretch reads KPHVNVGTIG…HLDTYIPEPE (195 aa). Positions 19–26 are G1; sequence GHVDHGKT. GTP is bound at residue 19–26; it reads GHVDHGKT. Mg(2+) is bound at residue T26. A G2 region spans residues 60–64; that stretch reads GITIN. The segment at 81 to 84 is G3; sequence DCPG. GTP is bound by residues 81 to 85 and 136 to 139; these read DCPGH and NKCD. The interval 136–139 is G4; that stretch reads NKCD. Residues 174-176 form a G5 region; that stretch reads SAL.

The protein belongs to the TRAFAC class translation factor GTPase superfamily. Classic translation factor GTPase family. EF-Tu/EF-1A subfamily. In terms of assembly, monomer.

It localises to the cytoplasm. It carries out the reaction GTP + H2O = GDP + phosphate + H(+). In terms of biological role, GTP hydrolase that promotes the GTP-dependent binding of aminoacyl-tRNA to the A-site of ribosomes during protein biosynthesis. The sequence is that of Elongation factor Tu from Klebsiella pneumoniae subsp. pneumoniae (strain ATCC 700721 / MGH 78578).